We begin with the raw amino-acid sequence, 186 residues long: Threonylcarbamoyl-AMP synthase (186 aa).

A YrdC-like domain is found at 2–186 (VSNLQQVVKA…ARTEQLLRQG (185 aa)).

The protein belongs to the SUA5 family. TsaC subfamily.

It is found in the cytoplasm. It catalyses the reaction L-threonine + hydrogencarbonate + ATP = L-threonylcarbamoyladenylate + diphosphate + H2O. Functionally, required for the formation of a threonylcarbamoyl group on adenosine at position 37 (t(6)A37) in tRNAs that read codons beginning with adenine. Catalyzes the conversion of L-threonine, HCO(3)(-)/CO(2) and ATP to give threonylcarbamoyl-AMP (TC-AMP) as the acyladenylate intermediate, with the release of diphosphate. This Vibrio vulnificus (strain CMCP6) protein is Threonylcarbamoyl-AMP synthase.